The following is a 266-amino-acid chain: Vitamin B12-binding protein (266 aa).

An N-terminal signal peptide occupies residues Met1 to Ala22. The region spanning Arg25 to Asp266 is the Fe/B12 periplasmic-binding domain. Cyanocob(III)alamin contacts are provided by residues Tyr50 and Asp242–Arg246. The cysteines at positions 183 and 259 are disulfide-linked.

It belongs to the BtuF family. As to quaternary structure, the complex is composed of two ATP-binding proteins (BtuD), two transmembrane proteins (BtuC) and a solute-binding protein (BtuF).

The protein localises to the periplasm. Functionally, part of the ABC transporter complex BtuCDF involved in vitamin B12 import. Binds vitamin B12 and delivers it to the periplasmic surface of BtuC. The protein is Vitamin B12-binding protein of Shigella flexneri.